Here is a 271-residue protein sequence, read N- to C-terminus: 2-dehydro-3-deoxyphosphooctonate aldolase (271 aa).

It belongs to the KdsA family.

It localises to the cytoplasm. The enzyme catalyses D-arabinose 5-phosphate + phosphoenolpyruvate + H2O = 3-deoxy-alpha-D-manno-2-octulosonate-8-phosphate + phosphate. It functions in the pathway carbohydrate biosynthesis; 3-deoxy-D-manno-octulosonate biosynthesis; 3-deoxy-D-manno-octulosonate from D-ribulose 5-phosphate: step 2/3. The protein operates within bacterial outer membrane biogenesis; lipopolysaccharide biosynthesis. The chain is 2-dehydro-3-deoxyphosphooctonate aldolase from Campylobacter jejuni subsp. jejuni serotype O:6 (strain 81116 / NCTC 11828).